Consider the following 348-residue polypeptide: Uroporphyrinogen decarboxylase (348 aa).

Substrate-binding positions include 28–32, Asp78, Tyr154, Thr209, and His325; that span reads RQAGR.

It belongs to the uroporphyrinogen decarboxylase family. As to quaternary structure, homodimer.

The protein resides in the cytoplasm. The catalysed reaction is uroporphyrinogen III + 4 H(+) = coproporphyrinogen III + 4 CO2. It participates in porphyrin-containing compound metabolism; protoporphyrin-IX biosynthesis; coproporphyrinogen-III from 5-aminolevulinate: step 4/4. Catalyzes the decarboxylation of four acetate groups of uroporphyrinogen-III to yield coproporphyrinogen-III. This chain is Uroporphyrinogen decarboxylase, found in Rhodopseudomonas palustris (strain HaA2).